The sequence spans 521 residues: 7-deoxyloganic acid hydroxylase (521 aa).

The chain crosses the membrane as a helical span at residues 8–28 (IIFLVFVSLTLYWVYRILDWV). N-linked (GlcNAc...) asparagine glycosylation is found at asparagine 107 and asparagine 311. Cysteine 469 contacts heme.

Belongs to the cytochrome P450 family. In terms of tissue distribution, mostly present in actively growing aerial organs, including leaves, flower buds and stems, and, to a lower extent, in mature leaves, roots and opened flowers. Expressed in the leaf internal phloem-associated parenchyma (IPAP) inside the mesophyll.

Its subcellular location is the endoplasmic reticulum membrane. The enzyme catalyses 7-deoxyloganate + reduced [NADPH--hemoprotein reductase] + O2 = loganate + oxidized [NADPH--hemoprotein reductase] + H2O + H(+). It functions in the pathway alkaloid biosynthesis. Its function is as follows. Component of the seco-iridoid and derivatives monoterpenoid indole alkaloids (MIAs, e.g. vincristine, quinine, and strychnine) biosynthesis pathway. Catalyzes the conversion of 7-deoxyloganic acid into loganic acid. Not active on 7-deoxyloganetic acid. In Catharanthus roseus (Madagascar periwinkle), this protein is 7-deoxyloganic acid hydroxylase.